Consider the following 332-residue polypeptide: Glyoxylate reductase (332 aa).

NADP(+) contacts are provided by residues 155 to 158 (MGRI) and 236 to 238 (TSR). Catalysis depends on residues Arg-238 and Glu-267. The active-site Proton donor is His-286. 286-288 (HAA) contacts NADP(+).

This sequence belongs to the D-isomer specific 2-hydroxyacid dehydrogenase family. GyaR subfamily. As to quaternary structure, homodimer.

It localises to the cytoplasm. The catalysed reaction is glycolate + NAD(+) = glyoxylate + NADH + H(+). The polypeptide is Glyoxylate reductase (Korarchaeum cryptofilum (strain OPF8)).